A 395-amino-acid chain; its full sequence is uncharacterized protein (395 aa).

10 helical membrane passes run 19–39, 49–69, 87–107, 137–157, 172–192, 206–226, 252–272, 279–299, 311–331, and 359–379; these read IGIA…IAII, VLLI…IYEL, LTWI…AVGG, LVII…PLGT, YINL…FYLI, TINI…SLIA, LIGG…MGMG, LFIM…KILA, GLVF…GSLI, and VLCT…GAVI.

The protein belongs to the chloride channel (TC 2.A.49) family.

The protein localises to the cell membrane. This is an uncharacterized protein from Methanocaldococcus jannaschii (strain ATCC 43067 / DSM 2661 / JAL-1 / JCM 10045 / NBRC 100440) (Methanococcus jannaschii).